Reading from the N-terminus, the 163-residue chain is Myosin light chain 2 (163 aa).

2 EF-hand domains span residues 15–50 (DYIN…LGKT) and 92–127 (PERE…AGFE). Ca(2+) is bound by residues Asp-28, Asp-30, Asp-32, and Asp-39.

Interacts with the IQ domain of MYO1.

The protein resides in the bud neck. Regulatory light chain for the class II conventional myosin MYO1. May play a role in the disassembly of the MYO1 ring at the bud neck at the end of its contraction during cytokinesis. The protein is Myosin light chain 2 (MLC2) of Saccharomyces cerevisiae (strain ATCC 204508 / S288c) (Baker's yeast).